The chain runs to 107 residues: Dispanin subfamily A member 2b (107 aa).

At 1-31 (MEYRTDQVPMSPRSVQGAPGTLPIRDHLPWS) the chain is on the extracellular side. The helical transmembrane segment at 32–52 (IFNLFYMNVCCLGLTAMIFSV) threads the bilayer. Residues Cys-41 and Cys-42 are each lipidated (S-palmitoyl cysteine). At 53–77 (KSRDRKVVGDVEGARHYGSTARSLN) the chain is on the cytoplasmic side. The helical transmembrane segment at 78 to 98 (IAATVLGILLIIILIGLAATG) threads the bilayer. The Extracellular portion of the chain corresponds to 99–107 (TIQALKYKG).

It belongs to the CD225/Dispanin family. Expressed various cell types in torpedo electric organ and muscle, especially fibroblasts, capillary endothelial cells, and axonal cuff cells.

It is found in the cell membrane. This is Dispanin subfamily A member 2b from Torpedo marmorata (Marbled electric ray).